Here is a 309-residue protein sequence, read N- to C-terminus: ADP-L-glycero-D-manno-heptose-6-epimerase (309 aa).

NADP(+) is bound by residues 10 to 11, 31 to 32, lysine 38, lysine 53, 75 to 79, and asparagine 92; these read LI, DN, and QGACS. The active-site Proton acceptor is tyrosine 139. Lysine 143 is a binding site for NADP(+). Position 168 (asparagine 168) interacts with substrate. NADP(+)-binding residues include valine 169 and lysine 177. Catalysis depends on lysine 177, which acts as the Proton acceptor. Substrate contacts are provided by residues serine 179, histidine 186, 200–203, arginine 208, and tyrosine 271; that span reads FAGS.

The protein belongs to the NAD(P)-dependent epimerase/dehydratase family. HldD subfamily. Homopentamer. NADP(+) is required as a cofactor.

The enzyme catalyses ADP-D-glycero-beta-D-manno-heptose = ADP-L-glycero-beta-D-manno-heptose. Its pathway is nucleotide-sugar biosynthesis; ADP-L-glycero-beta-D-manno-heptose biosynthesis; ADP-L-glycero-beta-D-manno-heptose from D-glycero-beta-D-manno-heptose 7-phosphate: step 4/4. Catalyzes the interconversion between ADP-D-glycero-beta-D-manno-heptose and ADP-L-glycero-beta-D-manno-heptose via an epimerization at carbon 6 of the heptose. The polypeptide is ADP-L-glycero-D-manno-heptose-6-epimerase (Histophilus somni (strain 2336) (Haemophilus somnus)).